The chain runs to 264 residues: 5'-nucleotidase SurE (264 aa).

D9, D10, S40, and N95 together coordinate a divalent metal cation.

Belongs to the SurE nucleotidase family. A divalent metal cation serves as cofactor.

The protein resides in the cytoplasm. The enzyme catalyses a ribonucleoside 5'-phosphate + H2O = a ribonucleoside + phosphate. Functionally, nucleotidase that shows phosphatase activity on nucleoside 5'-monophosphates. The polypeptide is 5'-nucleotidase SurE (Helicobacter hepaticus (strain ATCC 51449 / 3B1)).